The chain runs to 222 residues: Vespryn (222 aa).

An N-terminal signal peptide occupies residues 1–44; sequence MSPSAGLQFSLYFLQTKKVLWKLTDKEKGLCYILLFTLCFFADQ. The propeptide occupies 45–52; it reads ENGGKALA. Positions 53–159 constitute a B30.2/SPRY domain; that stretch reads SPPGIWKRAD…RIWQMGLWWL (107 aa). Positions 160-222 are excised as a propeptide; that stretch reads RHLETDPGRV…LGGTVSLTTL (63 aa). N-linked (GlcNAc...) asparagine glycosylation is present at asparagine 195.

The protein belongs to the ohanin/vespryn family. In terms of tissue distribution, expressed by the venom gland.

Its subcellular location is the secreted. In terms of biological role, neurotoxin that produces dose-dependent hypolocomotion and hyperalgesia in mice. May directly act on the central nervous system, as it is 6500-fold more potent when administered intracerebroventricularly than intraperitoneal. This is Vespryn from Crotalus adamanteus (Eastern diamondback rattlesnake).